A 1008-amino-acid chain; its full sequence is SKI family transcriptional corepressor 2 (1008 aa).

Disordered stretches follow at residues 280 to 315 and 514 to 927; these read HLLG…DDDD and EPGG…KKDV. Pro residues-rich tracts occupy residues 284–294 and 525–534; these read APPPPPPPPPL and APPPGQPPPV. Composition is skewed to low complexity over residues 535-544 and 578-595; these read VANGPGSGPP and GVTS…SVGT. Residues 626-635 are compositionally biased toward basic and acidic residues; sequence GGKDDAESLA. Positions 649 to 666 are enriched in basic residues; the sequence is PAHHHHHHHHPHHHHHHP. Pro residues predominate over residues 691–703; it reads APPPPPPPPPLAP. 2 stretches are compositionally biased toward acidic residues: residues 724–739 and 748–766; these read DSSE…QEVD and GEEE…EDEE. A compositionally biased stretch (basic and acidic residues) spans 787–797; that stretch reads LSEKGSGRDRT. Residues 842-855 show a composition bias toward low complexity; that stretch reads SSSGGSRPGSPVHH. 3 stretches are compositionally biased toward basic and acidic residues: residues 856 to 872, 880 to 890, and 905 to 915; these read PSLE…KPKE, TKDDNFSDKNK, and FWRERSGEHTQ.

This sequence belongs to the SKI family. Interacts with SMAD2 and SMAD3. As to expression, expression is restricted to adult and embryonic central nervous system. Expressed at high levels in the developing cerebellum, ventral metencephalon and myelencephalon at 12.5 dpc (at protein level). In the adult cerebellum, expressed specifically in Purkinje cells.

Its subcellular location is the nucleus. It is found in the cytoplasm. In terms of biological role, acts as a TGF-beta antagonist in the nervous system. Exhibits transcriptional repressor activity. The chain is SKI family transcriptional corepressor 2 from Mus musculus (Mouse).